The following is a 293-amino-acid chain: Putative ribose uptake protein RbsU (293 aa).

Transmembrane regions (helical) follow at residues 5 to 24 (AILI…TIAS), 34 to 51 (IFGA…LALF), 58 to 80 (GGMA…IITF), 95 to 114 (TTAF…LGNW), 121 to 138 (IIGF…RMTV), 153 to 170 (SAVI…IYSA), 177 to 199 (IGGF…IYAL), 212 to 234 (VSWQ…LISA), 241 to 263 (LATG…IFFL), and 273 to 292 (MITI…TVFI).

It belongs to the GRP transporter (TC 2.A.7.5) family.

It localises to the cell membrane. Could be involved in the uptake of ribose. This chain is Putative ribose uptake protein RbsU (rbsU), found in Staphylococcus epidermidis (strain ATCC 35984 / DSM 28319 / BCRC 17069 / CCUG 31568 / BM 3577 / RP62A).